Reading from the N-terminus, the 72-residue chain is MIIPWQGLAPDTLDNLIESFVLREGTDYGEHERSLEQKVADVKRQLQSGEAVLVWSELHETVNIMPKKQFRE.

This sequence belongs to the UPF0270 family.

The protein is UPF0270 protein YheU of Salmonella choleraesuis (strain SC-B67).